Reading from the N-terminus, the 647-residue chain is MRRYLAVRGGAGDVAEPDLNAKPQDNLYLAVNSEWLSKAEIPADQTSAGVNTELDIKIEKRMMKDFADIASGKEKMPDIRDFDKAIALYKIAKNFDKRDAEKANPIQNDLQKILDLINFDKFKDNATELFMGPYALPFVFDVDADMKNTDFNVLHFGGPSTFLPDTTTYKTPEAKKLLDILEKQSINLLEMAGIGKEEARVYVQNALAFDQKLSKVVKSTEEWSDYAAIYNPVSLTEFLAKFKSFDMADFLKTILPEKVERVIVMEPRFLDHADELINPANFDEIKGWMLVKYINSVAKYLSQDFRAAAFPFNQAISGTPELPSQIKQAYRLANGAFDEAVGIFYGKKYFGEEAKHDVEDMIHNMLKVYEQRINDNNWLSEDTKKKAIIKLRALVLKIGYPEKIEKIYDLLQIDPERSLYENEAQMATVRTKYMLDKLTQPVDRSVWLMPGNLNNACYDPQRNDLTFPAGILQAPFYDIHQSRGANYGGIGATIGHEVSHAFDNSGAKFDEHGNMNNWWTDEDFAEFNKRVGQMVDIFDGLQYGPAKINGKQVVGENIADLAGLACAVQAGKNDNVDLKDLFENYARSWMQKQRPEAIKTEVQVDVHAPQPTRVNIPVQCQDDFYTAFDVKPDDGMWLDPEDRITIW.

In terms of domain architecture, Peptidase M13 spans 1 to 647 (MRRYLAVRGG…LDPEDRITIW (647 aa)). His496 is a Zn(2+) binding site. Glu497 is an active-site residue. His500 and Glu556 together coordinate Zn(2+). The Proton donor role is filled by Asp560.

This sequence belongs to the peptidase M13 family. Zn(2+) is required as a cofactor.

In Lactobacillus helveticus (Lactobacillus suntoryeus), this protein is Neutral endopeptidase (pepO).